The primary structure comprises 306 residues: Ubiquitin-conjugating enzyme E2Q-like protein CG4502 (306 aa).

The disordered stretch occupies residues 18-77 (HKSSNNNNNNNNNHNNNINNNNNNDKVDGATGSSPNINNNNNNNNNNNNHDGAAAPSSAG). 2 stretches are compositionally biased toward low complexity: residues 22–41 (NNNNNNNNNHNNNINNNNNN) and 53–77 (NINNNNNNNNNNNNHDGAAAPSSAG). Residues 138–299 (IRTRRLMKEY…VKTHEKYGWV (162 aa)) enclose the UBC core domain. Cysteine 234 (glycyl thioester intermediate) is an active-site residue.

This sequence belongs to the ubiquitin-conjugating enzyme family.

It catalyses the reaction S-ubiquitinyl-[E1 ubiquitin-activating enzyme]-L-cysteine + [E2 ubiquitin-conjugating enzyme]-L-cysteine = [E1 ubiquitin-activating enzyme]-L-cysteine + S-ubiquitinyl-[E2 ubiquitin-conjugating enzyme]-L-cysteine.. Its pathway is protein modification; protein ubiquitination. Catalyzes the covalent attachment of ubiquitin to other proteins. The sequence is that of Ubiquitin-conjugating enzyme E2Q-like protein CG4502 from Drosophila melanogaster (Fruit fly).